Here is a 507-residue protein sequence, read N- to C-terminus: ATP synthase subunit alpha (507 aa).

168–175 (GDRQTGKT) lines the ATP pocket.

This sequence belongs to the ATPase alpha/beta chains family. As to quaternary structure, F-type ATPases have 2 components, CF(1) - the catalytic core - and CF(0) - the membrane proton channel. CF(1) has five subunits: alpha(3), beta(3), gamma(1), delta(1), epsilon(1). CF(0) has three main subunits: a(1), b(2) and c(9-12). The alpha and beta chains form an alternating ring which encloses part of the gamma chain. CF(1) is attached to CF(0) by a central stalk formed by the gamma and epsilon chains, while a peripheral stalk is formed by the delta and b chains.

The protein localises to the cell membrane. The catalysed reaction is ATP + H2O + 4 H(+)(in) = ADP + phosphate + 5 H(+)(out). In terms of biological role, produces ATP from ADP in the presence of a proton gradient across the membrane. The alpha chain is a regulatory subunit. This Mesomycoplasma hyopneumoniae (strain J / ATCC 25934 / NCTC 10110) (Mycoplasma hyopneumoniae) protein is ATP synthase subunit alpha.